The chain runs to 267 residues: L-aspartate dehydrogenase (267 aa).

The NAD(+) site is built by A124 and N190. The active site involves H218.

This sequence belongs to the L-aspartate dehydrogenase family.

The enzyme catalyses L-aspartate + NADP(+) + H2O = oxaloacetate + NH4(+) + NADPH + H(+). The catalysed reaction is L-aspartate + NAD(+) + H2O = oxaloacetate + NH4(+) + NADH + H(+). It functions in the pathway cofactor biosynthesis; NAD(+) biosynthesis; iminoaspartate from L-aspartate (dehydrogenase route): step 1/1. Its function is as follows. Specifically catalyzes the NAD or NADP-dependent dehydrogenation of L-aspartate to iminoaspartate. In Methanococcus maripaludis (strain DSM 14266 / JCM 13030 / NBRC 101832 / S2 / LL), this protein is L-aspartate dehydrogenase.